The chain runs to 61 residues: Large ribosomal subunit protein eL29 (61 aa).

The segment covering Met1–Lys26 has biased composition (basic residues). The segment at Met1 to Leu32 is disordered.

It belongs to the eukaryotic ribosomal protein eL29 family. In terms of assembly, component of the large ribosomal subunit (LSU). Mature yeast ribosomes consist of a small (40S) and a large (60S) subunit. The 40S small subunit contains 1 molecule of ribosomal RNA (18S rRNA) and at least 33 different proteins. The large 60S subunit contains 3 rRNA molecules (25S, 5.8S and 5S rRNA) and at least 46 different proteins.

The protein localises to the cytoplasm. Its subcellular location is the nucleus. It is found in the nucleolus. Component of the ribosome, a large ribonucleoprotein complex responsible for the synthesis of proteins in the cell. The small ribosomal subunit (SSU) binds messenger RNAs (mRNAs) and translates the encoded message by selecting cognate aminoacyl-transfer RNA (tRNA) molecules. The large subunit (LSU) contains the ribosomal catalytic site termed the peptidyl transferase center (PTC), which catalyzes the formation of peptide bonds, thereby polymerizing the amino acids delivered by tRNAs into a polypeptide chain. The nascent polypeptides leave the ribosome through a tunnel in the LSU and interact with protein factors that function in enzymatic processing, targeting, and the membrane insertion of nascent chains at the exit of the ribosomal tunnel. This is Large ribosomal subunit protein eL29 (rpl29) from Schizosaccharomyces pombe (strain 972 / ATCC 24843) (Fission yeast).